A 148-amino-acid polypeptide reads, in one-letter code: uncharacterized protein (148 aa).

Residues 97 to 112 (KKLDEQRMPGKPKNTE) show a composition bias toward basic and acidic residues. The disordered stretch occupies residues 97 to 126 (KKLDEQRMPGKPKNTEGSKSTIRKKANVGN).

This is an uncharacterized protein from Caenorhabditis elegans.